We begin with the raw amino-acid sequence, 390 residues long: Imidazolonepropionase (390 aa).

Positions 71 and 73 each coordinate Fe(3+). Zn(2+)-binding residues include His-71 and His-73. Residues Arg-80, Tyr-138, and His-165 each coordinate 4-imidazolone-5-propanoate. N-formimidoyl-L-glutamate is bound at residue Tyr-138. Position 228 (His-228) interacts with Fe(3+). Position 228 (His-228) interacts with Zn(2+). Gln-231 is a binding site for 4-imidazolone-5-propanoate. Asp-302 serves as a coordination point for Fe(3+). Position 302 (Asp-302) interacts with Zn(2+). Positions 304 and 306 each coordinate N-formimidoyl-L-glutamate. Position 307 (Ser-307) interacts with 4-imidazolone-5-propanoate.

This sequence belongs to the metallo-dependent hydrolases superfamily. HutI family. The cofactor is Zn(2+). It depends on Fe(3+) as a cofactor.

The protein resides in the cytoplasm. The catalysed reaction is 4-imidazolone-5-propanoate + H2O = N-formimidoyl-L-glutamate. It functions in the pathway amino-acid degradation; L-histidine degradation into L-glutamate; N-formimidoyl-L-glutamate from L-histidine: step 3/3. Its function is as follows. Catalyzes the hydrolytic cleavage of the carbon-nitrogen bond in imidazolone-5-propanoate to yield N-formimidoyl-L-glutamate. It is the third step in the universal histidine degradation pathway. The polypeptide is Imidazolonepropionase (Streptomyces griseus subsp. griseus (strain JCM 4626 / CBS 651.72 / NBRC 13350 / KCC S-0626 / ISP 5235)).